The chain runs to 101 residues: Small ribosomal subunit protein uS14 (101 aa).

This sequence belongs to the universal ribosomal protein uS14 family. As to quaternary structure, part of the 30S ribosomal subunit. Contacts proteins S3 and S10.

Binds 16S rRNA, required for the assembly of 30S particles and may also be responsible for determining the conformation of the 16S rRNA at the A site. The sequence is that of Small ribosomal subunit protein uS14 from Aliivibrio fischeri (strain MJ11) (Vibrio fischeri).